A 461-amino-acid polypeptide reads, in one-letter code: ATPSPPTLYGLCSCEQPNTDGSLAYGCLAMDYIPQITSVSWKKDNEPITTGLKTYPSVLNKKGTYTQSSQLTITESEVGSSKIYCEVRRGESVWIKEIPDCKGDKVHPTVILTQSSSEEITSRRFATVLCSIIDFHPESITVSWLKDGQHMESGFVTSPTCGVNGTFSATSRLTVPAREWFTNKVYTCQVSHQGVTQSRNITGSQVPCSCNDPVIKLLPPSIEQVLLEATVTLTCVVSNAPYGVNVSWTQEQKSLKSEIAVQPGEDADSVISTVNISTQAWLSGAEFYCVVNHQDLPTPLRASIHKEEVKDLREPSVSILLSPAEDVSAQRFLSLTCLVRGFFPREIFVKWTVNDKSVNPGNYKNTEVMAENDNSSYFIYSLLSIAAEEWASGASYSCVVGHEAIPLKIINRTVNKSSDSSDHIWIEDNEEESAIDNASTFIILFFLSIFYRAAVTLVKVK.

The segment at 1-99 is CH1; sequence ATPSPPTLYG…GESVWIKEIP (99 aa). Positions 100–205 are CH2; it reads DCKGDKVHPT…TQSRNITGSQ (106 aa). Residues Asn-164, Asn-200, Asn-245, Asn-275, Asn-374, Asn-411, Asn-415, and Asn-437 are each glycosylated (N-linked (GlcNAc...) asparagine). The interval 206–308 is CH3; the sequence is VPCSCNDPVI…PLRASIHKEE (103 aa). A CH4 region spans residues 309 to 418; that stretch reads VKDLREPSVS…IINRTVNKSS (110 aa). Residues 438–458 traverse the membrane as a helical segment; it reads ASTFIILFFLSIFYRAAVTLV.

The protein resides in the cell membrane. In Heterodontus francisci (Horn shark), this protein is Ig heavy chain C region, membrane-bound form.